We begin with the raw amino-acid sequence, 245 residues long: Glycerophosphodiester phosphodiesterase (245 aa).

The 240-residue stretch at 2 to 241 folds into the GP-PDE domain; the sequence is TKIFAHRGFK…DFPDRAVKIR (240 aa). Residue His7 is the Proton acceptor of the active site. A divalent metal cation contacts are provided by Glu34 and Asp36. His49 (proton donor) is an active-site residue. Glu110 is a binding site for a divalent metal cation.

The protein belongs to the glycerophosphoryl diester phosphodiesterase family. It depends on Ni(2+) as a cofactor. Co(2+) is required as a cofactor. The cofactor is Mn(2+).

It catalyses the reaction a sn-glycero-3-phosphodiester + H2O = an alcohol + sn-glycerol 3-phosphate + H(+). Its activity is regulated as follows. Inhibited by EDTA and various organic solvents such as chloroform, toluene or benzene. Functionally, glycerophosphodiester phosphodiesterase hydrolyzes glycerophosphodiesters into glycerol-3-phosphate (G3P) and the corresponding alcohol. Can hydrolyze the model substrate bis-(p-nitrophenyl phosphate) (bis(pNPP)) to p-nitrophenol. Can also catalyze the degradation of diphenyl phosphate (DPHP) to phenyl phosphate (PHP). DPHP is an aryl phosphate ester used as a chemical additive and an industrial catalyst that can easily spread to the environment and exhibits toxicity toward organisms. The sequence is that of Glycerophosphodiester phosphodiesterase from Bacillus altitudinis.